Reading from the N-terminus, the 145-residue chain is AN1-type zinc finger protein 2A (145 aa).

2 consecutive AN1-type zinc fingers follow at residues 4-52 and 94-142; these read PDLG…QKDV and KIFT…RPTI. Residues Cys-10, Cys-15, Cys-25, Cys-28, Cys-33, His-36, His-42, Cys-44, Cys-100, Cys-105, Cys-115, Cys-118, Cys-123, His-126, His-132, and Cys-134 each contribute to the Zn(2+) site.

The protein resides in the cytoplasm. Its subcellular location is the nucleus. The polypeptide is AN1-type zinc finger protein 2A (ZFAND2A) (Homo sapiens (Human)).